Here is a 45-residue protein sequence, read N- to C-terminus: Small polypeptide DEVIL 2 (45 aa).

Residues 14-45 (SQSRRLGKYLKEQKGRIYIIRRCVMMLLCSHD) form a required for DVL/RTFL small polypeptide activity region. A helical transmembrane segment spans residues 17–33 (RRLGKYLKEQKGRIYII).

This sequence belongs to the DVL/RTFL small polypeptides family. In terms of tissue distribution, mostly expressed in stems and, to a lower extent, in roots and leaves.

The protein localises to the cell membrane. Functionally, small polypeptide acting as a regulatory molecule which coordinates cellular responses required for differentiation, growth and development, including leaves shape, pedicule elongation, inflorescence organization and fruit maturation, probably by restricting polar cell proliferation in lateral organs and coordinating socket cell recruitment and differentiation at trichome sites. This Arabidopsis thaliana (Mouse-ear cress) protein is Small polypeptide DEVIL 2.